A 495-amino-acid polypeptide reads, in one-letter code: Sulfhydryl oxidase 2 (495 aa).

Positions 1–15 (MSLVHLLLFAGLVIA) are cleaved as a signal peptide. The Thioredoxin domain occupies 29-164 (EISDQKDKAV…LLNWINKQIG (136 aa)). The N-linked (GlcNAc...) asparagine glycan is linked to N41. Residues C66 and C69 each act as nucleophile in the active site. Residues C66 and C69 are joined by a disulfide bond. Residues N182, N257, N266, and N292 are each glycosylated (N-linked (GlcNAc...) asparagine). An intrachain disulfide couples C287 to C299. The 103-residue stretch at 290 to 392 (SKNDTRGFSC…GDPKFPKIIW (103 aa)) folds into the ERV/ALR sulfhydryl oxidase domain. Residues R295, W302, H306, E336, H340, 363–370 (WSTHNKVN), K389, and W392 contribute to the FAD site. An intrachain disulfide couples C334 to C337. C398 and C401 are oxidised to a cystine.

FAD serves as cofactor.

Its subcellular location is the secreted. The enzyme catalyses 2 R'C(R)SH + O2 = R'C(R)S-S(R)CR' + H2O2. In terms of biological role, catalyzes the oxidation of sulfhydryl groups in peptide and protein thiols to disulfides with the reduction of oxygen to hydrogen peroxide. May contribute to disulfide bond formation in a variety of secreted proteins. In Arabidopsis thaliana (Mouse-ear cress), this protein is Sulfhydryl oxidase 2 (QSOX2).